Reading from the N-terminus, the 206-residue chain is High frequency lysogenization protein HflD homolog (206 aa).

Belongs to the HflD family.

The protein resides in the cytoplasm. The protein localises to the cell inner membrane. The protein is High frequency lysogenization protein HflD homolog of Pseudomonas paraeruginosa (strain DSM 24068 / PA7) (Pseudomonas aeruginosa (strain PA7)).